The sequence spans 338 residues: tRNA N6-adenosine threonylcarbamoyltransferase (338 aa).

Fe cation is bound by residues His111 and His115. Substrate-binding positions include 134 to 138 (VVSGG), Asp167, Gly180, Asp184, and Asn272. Asp300 serves as a coordination point for Fe cation.

It belongs to the KAE1 / TsaD family. Requires Fe(2+) as cofactor.

It localises to the cytoplasm. It catalyses the reaction L-threonylcarbamoyladenylate + adenosine(37) in tRNA = N(6)-L-threonylcarbamoyladenosine(37) in tRNA + AMP + H(+). Its function is as follows. Required for the formation of a threonylcarbamoyl group on adenosine at position 37 (t(6)A37) in tRNAs that read codons beginning with adenine. Is involved in the transfer of the threonylcarbamoyl moiety of threonylcarbamoyl-AMP (TC-AMP) to the N6 group of A37, together with TsaE and TsaB. TsaD likely plays a direct catalytic role in this reaction. In Syntrophus aciditrophicus (strain SB), this protein is tRNA N6-adenosine threonylcarbamoyltransferase.